Consider the following 97-residue polypeptide: Sec-independent protein translocase protein TatA (97 aa).

Residues 1–21 form a helical membrane-spanning segment; that stretch reads MGFNIWSLLIILLIVALLFGT. The disordered stretch occupies residues 28 to 97; the sequence is GGDLGGAIRG…SAEHHDRSTS (70 aa). The span at 37-56 shows a compositional bias: basic and acidic residues; that stretch reads GFKESMREGEEEEAQKRADG. Residues 78 to 87 show a composition bias toward low complexity; that stretch reads QARESSSARQ. The span at 88 to 97 shows a compositional bias: basic and acidic residues; sequence SAEHHDRSTS.

This sequence belongs to the TatA/E family. The Tat system comprises two distinct complexes: a TatABC complex, containing multiple copies of TatA, TatB and TatC subunits, and a separate TatA complex, containing only TatA subunits. Substrates initially bind to the TatABC complex, which probably triggers association of the separate TatA complex to form the active translocon.

It localises to the cell inner membrane. Functionally, part of the twin-arginine translocation (Tat) system that transports large folded proteins containing a characteristic twin-arginine motif in their signal peptide across membranes. TatA could form the protein-conducting channel of the Tat system. In Halorhodospira halophila (strain DSM 244 / SL1) (Ectothiorhodospira halophila (strain DSM 244 / SL1)), this protein is Sec-independent protein translocase protein TatA.